Here is a 496-residue protein sequence, read N- to C-terminus: Nucleolar and spindle-associated protein 1-B (496 aa).

3 disordered regions span residues 44 to 206 (YPES…HEAH), 250 to 294 (TPVS…STAN), and 338 to 496 (KSSS…VPVK). Residues 56–69 (GCTSLTDTDELNSS) are compositionally biased toward polar residues. A compositionally biased stretch (basic and acidic residues) spans 121 to 134 (TQDKDCLESKKKEV). Residues 150–159 (QDTSKQNNSE) are compositionally biased toward polar residues. Residues 261-281 (SRLSLLSPLPRTTGASPSRTP) are compositionally biased toward low complexity. Polar residues-rich tracts occupy residues 376–396 (NTTI…NKAN) and 403–423 (AQNT…QASL). Low complexity predominate over residues 447–459 (SGSNSNVSVLKNN). The segment covering 467 to 485 (TREERRKQHELDRKGKRDQ) has biased composition (basic and acidic residues).

The protein belongs to the NUSAP family. In terms of assembly, interacts with DNA, microtubules, ipo7, kpna2 and kpnb1. Microtubule stabilization is inhibited by ipo7 and kpna2, while microtubule bundling is inhibited by kpnb1. Active GTP-bound ran causes dissociation of ipo7 and kpnb1.

The protein localises to the cytoplasm. It localises to the nucleus. It is found in the cytoskeleton. Its subcellular location is the spindle. In terms of biological role, microtubule-associated protein with the capacity to bundle and stabilize microtubules. May associate with chromosomes and promote the organization of meiotic or mitotic spindle microtubules around them. The sequence is that of Nucleolar and spindle-associated protein 1-B (nusap1-b) from Xenopus laevis (African clawed frog).